Reading from the N-terminus, the 260-residue chain is Ribosomal RNA small subunit methyltransferase J (260 aa).

Residues 125–126 and aspartate 179 contribute to the S-adenosyl-L-methionine site; that span reads ER.

This sequence belongs to the methyltransferase superfamily. RsmJ family.

The protein localises to the cytoplasm. The enzyme catalyses guanosine(1516) in 16S rRNA + S-adenosyl-L-methionine = N(2)-methylguanosine(1516) in 16S rRNA + S-adenosyl-L-homocysteine + H(+). Its function is as follows. Specifically methylates the guanosine in position 1516 of 16S rRNA. The polypeptide is Ribosomal RNA small subunit methyltransferase J (Pseudomonas fluorescens (strain Pf0-1)).